The primary structure comprises 146 residues: Large ribosomal subunit protein uL13 (146 aa).

The tract at residues 125–146 (YAGPKHPHAAQQPKVYEPRPRG) is disordered.

The protein belongs to the universal ribosomal protein uL13 family. In terms of assembly, part of the 50S ribosomal subunit.

Its function is as follows. This protein is one of the early assembly proteins of the 50S ribosomal subunit, although it is not seen to bind rRNA by itself. It is important during the early stages of 50S assembly. The chain is Large ribosomal subunit protein uL13 from Roseiflexus sp. (strain RS-1).